The following is a 153-amino-acid chain: Myosin regulatory light chain (153 aa).

Blocked amino end (Ala) is present on Ala-1. 2 consecutive EF-hand domains span residues 15 to 50 and 81 to 116; these read KQIQEMKEAFSMIDVDRDGFVSKDDIKAISEQLGRT and DSEETIRNAFAMFDEQENKKLNIEYIKDLLEDMGNN. Residues Asp-28, Asp-30, Asp-32, and Asp-39 each contribute to the Ca(2+) site.

In terms of biological role, in molluscan muscle, calcium regulation is associated with myosin rather than with actin. Muscle myosin contains two types of light chains: the catalytic light chain, essential for ATPase activity, and the regulatory light chain, a calcium-binding protein responsible for Ca(2+) dependent binding and Ca(2+) dependent Mg-ATPase activity. This Patinopecten sp. (Scallop) protein is Myosin regulatory light chain.